Consider the following 436-residue polypeptide: Glutamate-1-semialdehyde 2,1-aminomutase 2 (436 aa).

Lys-271 bears the N6-(pyridoxal phosphate)lysine mark.

It belongs to the class-III pyridoxal-phosphate-dependent aminotransferase family. HemL subfamily. Homodimer. It depends on pyridoxal 5'-phosphate as a cofactor.

It localises to the cytoplasm. The catalysed reaction is (S)-4-amino-5-oxopentanoate = 5-aminolevulinate. It functions in the pathway porphyrin-containing compound metabolism; protoporphyrin-IX biosynthesis; 5-aminolevulinate from L-glutamyl-tRNA(Glu): step 2/2. This is Glutamate-1-semialdehyde 2,1-aminomutase 2 from Exiguobacterium sibiricum (strain DSM 17290 / CCUG 55495 / CIP 109462 / JCM 13490 / 255-15).